The sequence spans 106 residues: MTEFKRIPPEQAQALREQGAVLVDVRDAQTFQSNHIPDSVHLDNHSIADFIAKADLDKPLVVVCYHGNSSQSAAAYLVGQGFSDVYSVDGGFELWRATYPDETVQG.

In terms of domain architecture, Rhodanese spans 16–104; it reads REQGAVLVDV…WRATYPDETV (89 aa). The Cysteine persulfide intermediate role is filled by C64.

The protein belongs to the GlpE family.

It localises to the cytoplasm. It carries out the reaction thiosulfate + hydrogen cyanide = thiocyanate + sulfite + 2 H(+). It catalyses the reaction thiosulfate + [thioredoxin]-dithiol = [thioredoxin]-disulfide + hydrogen sulfide + sulfite + 2 H(+). In terms of biological role, transferase that catalyzes the transfer of sulfur from thiosulfate to thiophilic acceptors such as cyanide or dithiols. May function in a CysM-independent thiosulfate assimilation pathway by catalyzing the conversion of thiosulfate to sulfite, which can then be used for L-cysteine biosynthesis. The sequence is that of Thiosulfate sulfurtransferase GlpE from Pseudomonas savastanoi pv. phaseolicola (strain 1448A / Race 6) (Pseudomonas syringae pv. phaseolicola (strain 1448A / Race 6)).